The chain runs to 1699 residues: Hybrid signal transduction histidine kinase E (1699 aa).

Disordered stretches follow at residues methionine 1–asparagine 32 and asparagine 58–valine 97. A compositionally biased stretch (low complexity) spans asparagine 7–asparagine 32. 6 helical membrane-spanning segments follow: residues cysteine 142–leucine 162, serine 164–threonine 184, leucine 191–isoleucine 211, leucine 238–proline 258, phenylalanine 262–isoleucine 282, and asparagine 295–isoleucine 315. A compositionally biased stretch (polar residues) spans isoleucine 412–tyrosine 432. Disordered regions lie at residues isoleucine 412–asparagine 439 and leucine 542–asparagine 593. Residues asparagine 544–asparagine 593 are compositionally biased toward low complexity. In terms of domain architecture, Histidine kinase spans threonine 678–threonine 950. Histidine 681 is subject to Phosphohistidine; by autocatalysis. Disordered regions lie at residues asparagine 819–asparagine 866, asparagine 1018–asparagine 1054, lysine 1186–serine 1239, methionine 1252–asparagine 1294, and serine 1351–proline 1406. A compositionally biased stretch (polar residues) spans methionine 1198–asparagine 1212. Low complexity predominate over residues serine 1219 to serine 1239. Polar residues predominate over residues lysine 1271–leucine 1282. Low complexity-rich tracts occupy residues asparagine 1283 to asparagine 1294 and asparagine 1355 to asparagine 1392. In terms of domain architecture, Response regulatory spans asparagine 1575–glycine 1695. Aspartate 1625 bears the 4-aspartylphosphate mark.

Its subcellular location is the membrane. It catalyses the reaction ATP + protein L-histidine = ADP + protein N-phospho-L-histidine.. Its function is as follows. May act in a signal transduction pathway. This protein undergoes an ATP-dependent autophosphorylation at a conserved histidine residue in the kinase core, and a phosphoryl group is then transferred to a conserved aspartate residue in the receiver domain. This chain is Hybrid signal transduction histidine kinase E (dhkE), found in Dictyostelium discoideum (Social amoeba).